The primary structure comprises 1249 residues: Voltage-dependent calcium channel unc-36 (1249 aa).

The N-terminal stretch at 1–19 (MRVVHLLVVLATYVSTTSS) is a signal peptide. The Extracellular segment spans residues 20–1228 (FNKESIKECA…SENERRPCST (1209 aa)). N100, N140, N146, N302, N520, N558, N757, N838, N903, N923, and N1130 each carry an N-linked (GlcNAc...) asparagine glycan. The VWFA domain maps to 250–479 (NVLIMLDMSG…EKIHHYIRRM (230 aa)). A helical membrane pass occupies residues 1229 to 1248 (SPTIVSIFQILFGVFLHFCI). Position 1249 (F1249) is a topological domain, cytoplasmic.

Decendants of the cells AB and AB.p (that give rise to nearly all non-pharyngeal neurons), decendants of P1 (that give rise to body muscle) and cell lineages that give rise to the adult and juvenile motor neurons. Expressed in body wall, vulval muscle and pharyngeal muscle.

The protein localises to the membrane. May act as an auxiliary subunit of the unc-2 voltage-gated calcium channel which appears to trigger calcium-activated signaling pathways that control the serotonin response. Inhibiting serotonin sensitivity of the vulval muscles results in egg laying defects. May act in both neurons and muscle cells to enhance motor activity as it is required for coordinated movement. Has a role in neural depolarization-induced calcium influx and pharyngeal pumping. Involved in restricting the expression of the putative olfactory receptor str-2 to only one of the two AWC neurons. The sequence is that of Voltage-dependent calcium channel unc-36 (unc-36) from Caenorhabditis elegans.